A 323-amino-acid chain; its full sequence is 3-dehydroquinate synthase (323 aa).

Belongs to the archaeal-type DHQ synthase family.

It catalyses the reaction 2-amino-2,3,7-trideoxy-D-lyxo-hept-6-ulosonate + NAD(+) + H2O = 3-dehydroquinate + NH4(+) + NADH + H(+). Its function is as follows. Catalyzes the oxidative deamination and cyclization of 2-amino-3,7-dideoxy-D-threo-hept-6-ulosonic acid (ADH) to yield 3-dehydroquinate (DHQ), which is fed into the canonical shikimic pathway of aromatic amino acid biosynthesis. The polypeptide is 3-dehydroquinate synthase (Archaeoglobus fulgidus (strain ATCC 49558 / DSM 4304 / JCM 9628 / NBRC 100126 / VC-16)).